Reading from the N-terminus, the 114-residue chain is T cell receptor beta variable 6-6 (114 aa).

An N-terminal signal peptide occupies residues 1–21 (MSISLLCCAAFPLLWAGPVNA). The 93-residue stretch at 22–114 (GVTQTPKFRI…TSVYFCASSY (93 aa)) folds into the Ig-like domain. A disulfide bond links C42 and C110. N84 carries N-linked (GlcNAc...) asparagine glycosylation.

In terms of assembly, alpha-beta TR is a heterodimer composed of an alpha and beta chain; disulfide-linked. The alpha-beta TR is associated with the transmembrane signaling CD3 coreceptor proteins to form the TR-CD3 (TcR or TCR). The assembly of alpha-beta TR heterodimers with CD3 occurs in the endoplasmic reticulum where a single alpha-beta TR heterodimer associates with one CD3D-CD3E heterodimer, one CD3G-CD3E heterodimer and one CD247 homodimer forming a stable octameric structure. CD3D-CD3E and CD3G-CD3E heterodimers preferentially associate with TR alpha and TR beta chains, respectively. The association of the CD247 homodimer is the last step of TcR assembly in the endoplasmic reticulum and is required for transport to the cell surface.

The protein resides in the cell membrane. V region of the variable domain of T cell receptor (TR) beta chain that participates in the antigen recognition. Alpha-beta T cell receptors are antigen specific receptors which are essential to the immune response and are present on the cell surface of T lymphocytes. Recognize peptide-major histocompatibility (MH) (pMH) complexes that are displayed by antigen presenting cells (APC), a prerequisite for efficient T cell adaptive immunity against pathogens. Binding of alpha-beta TR to pMH complex initiates TR-CD3 clustering on the cell surface and intracellular activation of LCK that phosphorylates the ITAM motifs of CD3G, CD3D, CD3E and CD247 enabling the recruitment of ZAP70. In turn ZAP70 phosphorylates LAT, which recruits numerous signaling molecules to form the LAT signalosome. The LAT signalosome propagates signal branching to three major signaling pathways, the calcium, the mitogen-activated protein kinase (MAPK) kinase and the nuclear factor NF-kappa-B (NF-kB) pathways, leading to the mobilization of transcription factors that are critical for gene expression and essential for T cell growth and differentiation. The T cell repertoire is generated in the thymus, by V-(D)-J rearrangement. This repertoire is then shaped by intrathymic selection events to generate a peripheral T cell pool of self-MH restricted, non-autoaggressive T cells. Post-thymic interaction of alpha-beta TR with the pMH complexes shapes TR structural and functional avidity. The polypeptide is T cell receptor beta variable 6-6 (Homo sapiens (Human)).